The chain runs to 418 residues: Tyrosine--tRNA ligase (418 aa).

Residue tyrosine 39 coordinates L-tyrosine. Positions 44–53 (CTAASLHVGH) match the 'HIGH' region motif. L-tyrosine contacts are provided by tyrosine 176 and glutamine 180. The short motif at 236–240 (KMGKT) is the 'KMSKS' region element. Lysine 239 is a binding site for ATP. In terms of domain architecture, S4 RNA-binding spans 350-418 (IGVLVAFAEK…KKKHVLLRLA (69 aa)).

Belongs to the class-I aminoacyl-tRNA synthetase family. TyrS type 1 subfamily. In terms of assembly, homodimer.

Its subcellular location is the cytoplasm. It carries out the reaction tRNA(Tyr) + L-tyrosine + ATP = L-tyrosyl-tRNA(Tyr) + AMP + diphosphate + H(+). Catalyzes the attachment of tyrosine to tRNA(Tyr) in a two-step reaction: tyrosine is first activated by ATP to form Tyr-AMP and then transferred to the acceptor end of tRNA(Tyr). In Rhodopseudomonas palustris (strain ATCC BAA-98 / CGA009), this protein is Tyrosine--tRNA ligase.